A 68-amino-acid polypeptide reads, in one-letter code: UPF0434 protein BTH_I0741 (68 aa).

The protein belongs to the UPF0434 family.

This chain is UPF0434 protein BTH_I0741, found in Burkholderia thailandensis (strain ATCC 700388 / DSM 13276 / CCUG 48851 / CIP 106301 / E264).